The primary structure comprises 583 residues: Orphan steroid hormone receptor 2 (583 aa).

Residues 84–159 (IELCAVCGDK…MGMKSDSVQC (76 aa)) constitute a DNA-binding region (nuclear receptor). 2 consecutive NR C4-type zinc fingers follow at residues 87-107 (CAVCGDKASGRHYGAISCEGC) and 123-142 (CRGNKDCQIIKHNRNRCQYC). The NR LBD domain maps to 248–563 (TLASVVTSLA…SIIPYILRME (316 aa)).

The protein belongs to the nuclear hormone receptor family. NR2 subfamily. In terms of assembly, binds DNA as a monomer. As to expression, expressed uniformly in the early embryo. In contrast, larval expression is localized to the epaulettes and mouth epithelium. Expressed in multiple adult organs including lantern muscle, tubefeet, intestine, coelomocytes and gonads. In the adult ovaries and testes, expression is specifically localized to the smooth muscle epithelial layer of cells which surround the ovarioles and acini, respectively (at protein level).

The protein resides in the cytoplasm. It is found in the nucleus. In terms of biological role, orphan nuclear receptor. Binds to the hormone response element in the upstream promoter region of the CYIIIB gene in vitro. Both isoform 1 and isoform 2 bind DNA. The protein is Orphan steroid hormone receptor 2 of Strongylocentrotus purpuratus (Purple sea urchin).